The primary structure comprises 962 residues: Glutamate receptor 1 (962 aa).

The signal sequence occupies residues 1–25; the sequence is MFSSFSFLNMFGVLFTVFNLTVVQP. Residues 26 to 591 are Extracellular-facing; sequence YPSHIIIKSF…SVFSFMQPLS (566 aa). N-linked (GlcNAc...) asparagine glycans are attached at residues N190, N220, N275, N333, N441, and N482. Residues 592-612 traverse the membrane as a helical segment; sequence TEIWMYIIFAYIGVSVVIFLV. The Cytoplasmic segment spans residues 613–668; it reads SRFSPYEWRVEETSRGGFTISNDFSVYNCLWFTLAAFMQQGTDILPRSISGRIASS. The helical transmembrane segment at 669-689 threads the bilayer; it reads AWWFFTMIIVSSYTANLAAFL. The Extracellular portion of the chain corresponds to 690 to 855; it reads TLEKMQAPIE…GSSASLNLSK (166 aa). An N-linked (GlcNAc...) asparagine glycan is attached at N852. A helical transmembrane segment spans residues 856-876; it reads VAGIFYILMGGMVISMLAALG. Topologically, residues 877–962 are cytoplasmic; the sequence is EFLYRSRIEA…PANTLYNTAV (86 aa).

Belongs to the glutamate-gated ion channel (TC 1.A.10.1) family. Interacts with sol-1. Interacts with cni-1; the interaction negatively regulates export of glr-1 from the endoplasmic reticulum to synapses. Interacts with usp-46; the interaction results in deubiquitination of glr-1. Ubiquitinated. Deubiquitinated by usp-46 which prevents its degradation. Post-translationally, glycosylated. Command interneurons of the locomotory control circuit (AIB, AVA, AVB, AVD, AVE and PVC) and motor neurons (RMD, RIM, SMD, AVG, PVQ and URY).

Its subcellular location is the postsynaptic cell membrane. It is found in the endoplasmic reticulum. It localises to the synapse. The protein localises to the cell membrane. The protein resides in the recycling endosome. Its subcellular location is the cell projection. It is found in the dendrite. It localises to the perikaryon. Non-NMDA (N-methyl-D-aspartate) ionotropic glutamate receptor. L-glutamate acts as an excitatory neurotransmitter at many synapses in the central nervous system. The postsynaptic actions of glutamate are mediated by a variety of receptors that are named according to their selective agonists. May contribute to a sensory discrimination between mechanical and chemical stimuli. Plays a role in controlling movement in response to environmental cues such as food availability and mechanosensory stimulation such as the nose touch response. In AIB interneurons, promotes omega turns, a movement that frequently follows backwards locomotion or 'reversals' in response to environmental cues while possibly playing an inhibitory role in alternative neurons to inhibit omega turns. This Caenorhabditis elegans protein is Glutamate receptor 1.